The primary structure comprises 225 residues: Biosynthetic peptidoglycan transglycosylase (225 aa).

The helical transmembrane segment at 8–28 (VLLIFIGAILLIQLWIFSSLV) threads the bilayer.

It belongs to the glycosyltransferase 51 family.

Its subcellular location is the cell inner membrane. It carries out the reaction [GlcNAc-(1-&gt;4)-Mur2Ac(oyl-L-Ala-gamma-D-Glu-L-Lys-D-Ala-D-Ala)](n)-di-trans,octa-cis-undecaprenyl diphosphate + beta-D-GlcNAc-(1-&gt;4)-Mur2Ac(oyl-L-Ala-gamma-D-Glu-L-Lys-D-Ala-D-Ala)-di-trans,octa-cis-undecaprenyl diphosphate = [GlcNAc-(1-&gt;4)-Mur2Ac(oyl-L-Ala-gamma-D-Glu-L-Lys-D-Ala-D-Ala)](n+1)-di-trans,octa-cis-undecaprenyl diphosphate + di-trans,octa-cis-undecaprenyl diphosphate + H(+). The protein operates within cell wall biogenesis; peptidoglycan biosynthesis. Its function is as follows. Peptidoglycan polymerase that catalyzes glycan chain elongation from lipid-linked precursors. The sequence is that of Biosynthetic peptidoglycan transglycosylase from Acinetobacter baumannii (strain AB307-0294).